The chain runs to 303 residues: Recombination-associated protein RdgC (303 aa).

The protein belongs to the RdgC family.

It is found in the cytoplasm. The protein localises to the nucleoid. May be involved in recombination. In Salmonella agona (strain SL483), this protein is Recombination-associated protein RdgC.